A 574-amino-acid polypeptide reads, in one-letter code: K(+)/H(+) antiporter NhaP2 (574 aa).

Transmembrane regions (helical) follow at residues 6–26 (INSFFLIGALLTAVSVLLSPM), 34–54 (ILLIFLAVGILAGEDGPGGIL), 58–78 (YSTAYLVSNFALAIILLDGGM), 87–107 (VALWPALSLATFGVAITTSIT), 109–129 (VMAAWLFDLHWLQGLLVGAIV), 173–193 (IAILANVGAELSASFMLISFI), 196–216 (FGLGVLLGLGGGWLLWKLVNV), 219–239 (LAEGLYSILVLSGGLMIYATS), 242–262 (LGGSGILSIYLVGLFLGNKPT), 271–291 (VLDGMTWVSQIGMFLVLGLLL), 299–319 (IWLPGLALAFGMILFARPLAV), 335–355 (WFISWVGLRGAVPIILAVFPM), and 359–379 (LPGAQLYFNLAFFVVIVSLLV). In terms of domain architecture, RCK C-terminal spans 405 to 486 (SGVEIYPKSE…LEALSNLFSQ (82 aa)).

This sequence belongs to the monovalent cation:proton antiporter 1 (CPA1) transporter (TC 2.A.36) family. NhaP2 subfamily.

The protein resides in the cell inner membrane. It carries out the reaction K(+)(in) + H(+)(out) = K(+)(out) + H(+)(in). In terms of biological role, k(+)/H(+) antiporter that extrudes potassium in exchange for external protons and maintains the internal concentration of potassium under toxic levels. In Shewanella oneidensis (strain ATCC 700550 / JCM 31522 / CIP 106686 / LMG 19005 / NCIMB 14063 / MR-1), this protein is K(+)/H(+) antiporter NhaP2.